Consider the following 59-residue polypeptide: Large ribosomal subunit protein bL32 (59 aa).

Residues 1 to 20 (MAVQQNKKSRSRKGMRRSHD) are disordered. Positions 7-19 (KKSRSRKGMRRSH) are enriched in basic residues.

The protein belongs to the bacterial ribosomal protein bL32 family.

The sequence is that of Large ribosomal subunit protein bL32 from Nitratidesulfovibrio vulgaris (strain ATCC 29579 / DSM 644 / CCUG 34227 / NCIMB 8303 / VKM B-1760 / Hildenborough) (Desulfovibrio vulgaris).